The following is a 570-amino-acid chain: Glutamate--tRNA ligase (570 aa).

A 'HIGH' region motif is present at residues 107-117 (PNPDFVLHLGS).

The protein belongs to the class-I aminoacyl-tRNA synthetase family. Glutamate--tRNA ligase type 2 subfamily.

Its subcellular location is the cytoplasm. The enzyme catalyses tRNA(Glu) + L-glutamate + ATP = L-glutamyl-tRNA(Glu) + AMP + diphosphate. Its function is as follows. Catalyzes the attachment of glutamate to tRNA(Glu) in a two-step reaction: glutamate is first activated by ATP to form Glu-AMP and then transferred to the acceptor end of tRNA(Glu). The chain is Glutamate--tRNA ligase from Pyrobaculum islandicum (strain DSM 4184 / JCM 9189 / GEO3).